A 219-amino-acid chain; its full sequence is Claudin-6 (219 aa).

Residues 1-7 (MASTGLQ) lie on the Cytoplasmic side of the membrane. Residues 8–28 (ILGIVLTLLGWVNALVSCALP) form a helical membrane-spanning segment. At 29–81 (MWKVTAFIGNSIVVAQMVWEGLWMSCVVQSTGQMQCKVYDSLLALPQDLQAAR) the chain is on the extracellular side. The helical transmembrane segment at 82 to 102 (ALCVVTLLIVLLGLLVYLAGA) threads the bilayer. The Cytoplasmic segment spans residues 103 to 116 (KCTTCVEDRNSKSR). The chain crosses the membrane as a helical span at residues 117-137 (LVLISGIIFVISGVLTLIPVC). The Extracellular segment spans residues 138 to 163 (WTAHSIIQDFYNPLVADAQKRELGAS). Residues 164-184 (LYLGWAASGLLLLGGGLLCCA) form a helical membrane-spanning segment. At 185–219 (CSSGGTQGPRHYMACYSTSVPHSRGPSEYPTKNYV) the chain is on the cytoplasmic side. Phosphoserine is present on residues S201, S203, S207, and S211. The interval 218 to 219 (YV) is interactions with TJP1, TJP2 and TJP3.

Belongs to the claudin family. As to quaternary structure, directly interacts with TJP1/ZO-1, TJP2/ZO-2 and TJP3/ZO-3. Interacts with CLDN1, CD81 and OCLN. In terms of tissue distribution, expressed mostly in embryonic tissues.

The protein resides in the cell junction. The protein localises to the tight junction. Its subcellular location is the cell membrane. In terms of biological role, plays a major role in tight junction-specific obliteration of the intercellular space, through calcium-independent cell-adhesion activity. The sequence is that of Claudin-6 (Cldn6) from Mus musculus (Mouse).